The primary structure comprises 959 residues: General vesicular transport factor p115 (959 aa).

Residues 1–637 (MNFLRGVMGG…IYKSSEEDKK (637 aa)) form a globular head region. ARM repeat units lie at residues 20–60 (AETI…VGIQ), 61–121 (AMEH…IKQP), 123–163 (NVTL…IILV), 166–207 (MGVS…VAFE), 208–253 (NAFE…FKEG), 255–310 (YIQR…MFQC), 311–354 (GLLQ…FASV), 363–408 (PAIV…ATLL), 420–459 (SAGQ…EQLL), 473–513 (SLLQ…THFL), 518–571 (NVPF…IEKR), and 573–630 (GKEN…AIYK). Serine 50 is subject to Phosphoserine. N6-acetyllysine is present on lysine 202. Positions 638 to 930 (EEEVKKTLEQ…LSLKSKLKDL (293 aa)) form a coiled coil. A disordered region spans residues 925–959 (SKLKDLGHPVEEEDESGDQEDDDDELDDGDRDQDI). Positions 935-959 (EEEDESGDQEDDDDELDDGDRDQDI) are enriched in acidic residues. Position 940 is a phosphoserine (serine 940).

Belongs to the VDP/USO1/EDE1 family. In terms of assembly, homodimer. Dimerizes by parallel association of the tails, resulting in an elongated structure with two globular head domains side by side, and a long rod-like tail structure. Interacts with MIF. Interacts with GM130/GOLGA2; interaction is disrupted upon phosphorylation of GM130/GOLGA2 by CDK1 at the onset of mitosis. Phosphorylated in a cell cycle-specific manner; phosphorylated in interphase but not in mitotic cells. Dephosphorylated protein associates with the Golgi membrane; phosphorylation promostes dissociation.

The protein localises to the cytoplasm. Its subcellular location is the cytosol. It is found in the golgi apparatus membrane. Its function is as follows. General vesicular transport factor required for intercisternal transport in the Golgi stack; it is required for transcytotic fusion and/or subsequent binding of the vesicles to the target membrane. May well act as a vesicular anchor by interacting with the target membrane and holding the vesicular and target membranes in proximity. The polypeptide is General vesicular transport factor p115 (Uso1) (Rattus norvegicus (Rat)).